A 374-amino-acid chain; its full sequence is Serpin B8 (374 aa).

The protein belongs to the serpin family. Ov-serpin subfamily.

Its subcellular location is the cytoplasm. Functionally, has an important role in epithelial desmosome-mediated cell-cell adhesion. This is Serpin B8 (SERPINB8) from Bos taurus (Bovine).